A 514-amino-acid polypeptide reads, in one-letter code: Alanine--glyoxylate aminotransferase 2, mitochondrial (514 aa).

The N-terminal 41 residues, 1 to 41 (MTLIWRHLLRPLCLVTPAPRILEMRPFLNLGASWTSVTKLS), are a transit peptide targeting the mitochondrion. K71 bears the N6-acetyllysine; alternate mark. K71 carries the post-translational modification N6-succinyllysine; alternate. Position 84 is an N6-acetyllysine (K84). K262 is subject to N6-acetyllysine; alternate. The residue at position 262 (K262) is an N6-succinyllysine; alternate. Position 304 is an N6-succinyllysine (K304). Residue K350 is modified to N6-(pyridoxal phosphate)lysine. N6-acetyllysine; alternate is present on K420. K420 carries the N6-succinyllysine; alternate modification.

Belongs to the class-III pyridoxal-phosphate-dependent aminotransferase family. Homotetramer. The cofactor is pyridoxal 5'-phosphate.

The protein localises to the mitochondrion. The enzyme catalyses glyoxylate + L-alanine = glycine + pyruvate. The catalysed reaction is (R)-3-amino-2-methylpropanoate + pyruvate = 2-methyl-3-oxopropanoate + L-alanine. It catalyses the reaction 3-oxopropanoate + L-alanine = beta-alanine + pyruvate. It carries out the reaction 2-oxobutanoate + L-alanine = (2S)-2-aminobutanoate + pyruvate. The enzyme catalyses N(omega),N(omega)-dimethyl-L-arginine + pyruvate = 5-(3,3-dimethylguanidino)-2-oxopentanoate + L-alanine. The catalysed reaction is N(omega),N('omega)-dimethyl-L-arginine + pyruvate = 5-(3,3'-dimethylguanidino)-2-oxopentanoate + L-alanine. It catalyses the reaction N(omega),N(omega)-dimethyl-L-arginine + glyoxylate = 5-(3,3-dimethylguanidino)-2-oxopentanoate + glycine. It carries out the reaction N(omega),N('omega)-dimethyl-L-arginine + glyoxylate = 5-(3,3'-dimethylguanidino)-2-oxopentanoate + glycine. The enzyme catalyses N(omega)-methyl-L-arginine + pyruvate = 5-(3-methylguanidino)-2-oxopentanoate + L-alanine. The catalysed reaction is N(omega)-methyl-L-arginine + glyoxylate = 5-(3-methylguanidino)-2-oxopentanoate + glycine. It catalyses the reaction L-ornithine + pyruvate = 5-amino-2-oxopentanoate + L-alanine. It carries out the reaction L-ornithine + glyoxylate = 5-amino-2-oxopentanoate + glycine. The enzyme catalyses (2S)-2-aminobutanoate + glyoxylate = 2-oxobutanoate + glycine. The catalysed reaction is N(omega),N(omega)-dimethyl-L-arginine + oxaloacetate = 5-(3,3-dimethylguanidino)-2-oxopentanoate + L-aspartate. It catalyses the reaction oxaloacetate + L-alanine = L-aspartate + pyruvate. It carries out the reaction N(omega),N(omega)-dimethyl-L-arginine + 2-oxobutanoate = 5-(3,3-dimethylguanidino)-2-oxopentanoate + (2S)-2-aminobutanoate. The enzyme catalyses 2-oxopentanoate + N(omega),N(omega)-dimethyl-L-arginine = 5-(3,3-dimethylguanidino)-2-oxopentanoate + L-2-aminopentanoate. The catalysed reaction is 2-oxohexanoate + N(omega),N(omega)-dimethyl-L-arginine = L-2-aminohexanoate + 5-(3,3-dimethylguanidino)-2-oxopentanoate. Functionally, multifunctional aminotransferase with a broad substrate specificity. Catalyzes the conversion of glyoxylate to glycine using alanine as the amino donor. Catalyzes metabolism of not L- but the D-isomer of D-beta-aminoisobutyric acid to generate 2-methyl-3-oxopropanoate and alanine. Catalyzes the transfer of the amino group from beta-alanine to pyruvate to yield L-alanine and 3-oxopropanoate. Can metabolize NG-monomethyl-L-arginine (NMMA), asymmetric NG,NG-dimethyl-L-arginine (ADMA) and symmetric NG,N'G-dimethyl-L-arginine (SDMA). ADMA is a potent inhibitor of nitric-oxide (NO) synthase, and this activity provides mechanism through which the kidney regulates blood pressure. In Pongo abelii (Sumatran orangutan), this protein is Alanine--glyoxylate aminotransferase 2, mitochondrial (AGXT2).